Consider the following 260-residue polypeptide: Alpha- and beta-fibrinogenase OhS1 (260 aa).

The N-terminal stretch at 1–18 (MALIRVLASLLILQLSYA) is a signal peptide. Positions 19 to 24 (VTPFDR) are excised as a propeptide. The 224-residue stretch at 25-248 (IIGGFECNEY…YIDWIEGIIA (224 aa)) folds into the Peptidase S1 domain. 6 disulfides stabilise this stretch: cysteine 31-cysteine 163, cysteine 50-cysteine 66, cysteine 98-cysteine 255, cysteine 142-cysteine 209, cysteine 174-cysteine 188, and cysteine 199-cysteine 224. A glycan (N-linked (GlcNAc...) asparagine) is linked at asparagine 44. The active-site Charge relay system is the histidine 65. An N-linked (GlcNAc...) asparagine glycan is attached at asparagine 79. Residue aspartate 110 is the Charge relay system of the active site. Residues asparagine 117 and asparagine 121 are each glycosylated (N-linked (GlcNAc...) asparagine). Serine 203 (charge relay system) is an active-site residue. N-linked (GlcNAc...) asparagine glycosylation is present at asparagine 250.

This sequence belongs to the peptidase S1 family. Snake venom subfamily. In terms of assembly, monomer. Expressed by the venom gland.

The protein localises to the secreted. With respect to regulation, completely inhibited by NPGB, PMSF, diisopropylfluorophosphate (DFP), benzamidine and soybean trypsin inhibitor. Not inhibited by EDTA. Snake venom serine protease that possesses potent fibrinogenolytic (on both alpha- (FGA) and beta-chains (FGB)) and amidolytic activities. Selectively cleaves Arg-|-Xaa or Lys-|-Xaa bonds. The protein is Alpha- and beta-fibrinogenase OhS1 of Ophiophagus hannah (King cobra).